The sequence spans 322 residues: MFEIHPVKKVSVVIPVYNEQESLPELIRRTTTACESLGKEYEILLIDDGSSDNSAHMLVEASQAENSHIVSILLNRNYGQHSAIMAGFSHVTGDLIITLDADLQNPPEEIPRLVAKADEGYDVVGTVRQNRQDSWFRKTASKMINRLIQRTTGKAMGNYGCMLRAYRRHIVDAMLHCHERSTFIPILANIFARRAIEIPVHHAEREFGESKYSFMRLINLMYDLVTCLTTTPLRMLSLLGSIIAIGGFSIAVLLVILRLTFGPQWAAEGVFMLFAVLFTFIGAQFIGMGLLGEYIGRIYTDVRARPRYFVQQVIRPSSKENE.

Over 1-235 (MFEIHPVKKV…TCLTTTPLRM (235 aa)) the chain is Cytoplasmic. Residues 236–256 (LSLLGSIIAIGGFSIAVLLVI) traverse the membrane as a helical segment. Over 257 to 269 (LRLTFGPQWAAEG) the chain is Periplasmic. A helical membrane pass occupies residues 270–290 (VFMLFAVLFTFIGAQFIGMGL). At 291-322 (LGEYIGRIYTDVRARPRYFVQQVIRPSSKENE) the chain is on the cytoplasmic side.

It belongs to the glycosyltransferase 2 family.

It is found in the cell inner membrane. The catalysed reaction is UDP-4-deoxy-4-formamido-beta-L-arabinose + di-trans,octa-cis-undecaprenyl phosphate = 4-deoxy-4-formamido-alpha-L-arabinopyranosyl di-trans,octa-cis-undecaprenyl phosphate + UDP. It functions in the pathway glycolipid biosynthesis; 4-amino-4-deoxy-alpha-L-arabinose undecaprenyl phosphate biosynthesis; 4-amino-4-deoxy-alpha-L-arabinose undecaprenyl phosphate from UDP-4-deoxy-4-formamido-beta-L-arabinose and undecaprenyl phosphate: step 1/2. The protein operates within bacterial outer membrane biogenesis; lipopolysaccharide biosynthesis. Its function is as follows. Catalyzes the transfer of 4-deoxy-4-formamido-L-arabinose from UDP to undecaprenyl phosphate. The modified arabinose is attached to lipid A and is required for resistance to polymyxin and cationic antimicrobial peptides. This Shigella flexneri serotype 5b (strain 8401) protein is Undecaprenyl-phosphate 4-deoxy-4-formamido-L-arabinose transferase.